A 168-amino-acid chain; its full sequence is Photosystem I assembly protein Ycf3 (168 aa).

3 TPR repeats span residues 35–68 (AFTYYRDGMSAQSEGNYAEALQNYYEAMRLEIDP), 72–105 (SYILYNIGLIHTSNGEHTKALEYYFRALERNPFL), and 120–153 (GEQAIQQGDSEIAEAWFDQAAEYWKQAIALTPGN).

The protein belongs to the Ycf3 family.

The protein localises to the plastid. The protein resides in the chloroplast thylakoid membrane. Essential for the assembly of the photosystem I (PSI) complex. May act as a chaperone-like factor to guide the assembly of the PSI subunits. The sequence is that of Photosystem I assembly protein Ycf3 from Solanum bulbocastanum (Wild potato).